Reading from the N-terminus, the 356-residue chain is 3-dehydroquinate synthase (356 aa).

Residues 69–74, 103–107, 127–128, K140, and K149 contribute to the NAD(+) site; these read DGEQYK, GVVGD, and TT. 3 residues coordinate Zn(2+): E182, H245, and H262.

It belongs to the sugar phosphate cyclases superfamily. Dehydroquinate synthase family. It depends on Co(2+) as a cofactor. Requires Zn(2+) as cofactor. NAD(+) serves as cofactor.

Its subcellular location is the cytoplasm. It carries out the reaction 7-phospho-2-dehydro-3-deoxy-D-arabino-heptonate = 3-dehydroquinate + phosphate. The protein operates within metabolic intermediate biosynthesis; chorismate biosynthesis; chorismate from D-erythrose 4-phosphate and phosphoenolpyruvate: step 2/7. In terms of biological role, catalyzes the conversion of 3-deoxy-D-arabino-heptulosonate 7-phosphate (DAHP) to dehydroquinate (DHQ). In Pseudoalteromonas translucida (strain TAC 125), this protein is 3-dehydroquinate synthase.